The following is a 106-amino-acid chain: Foxo1-corepressor (106 aa).

Residues 1 to 44 (MGGPTRRHQEEGSAECLGGPSTRAAPGPGLRDFHFTTAGPSKAD) form a disordered region. The Nuclear export signal motif lies at 78–87 (IGTLYIRLDL). Residue Thr93 is modified to Phosphothreonine; by PKA.

As to quaternary structure, interacts with FOXO1 (via N-terminal domain); the interaction is direct, occurs in a forskolin-independent manner that prevents SIRT1 binding to FOXO1. Interacts with FOXO3. Does not interact with FOXO4. In terms of processing, phosphorylated at Thr-93 by PKA, leading to import into the nucleus. Expressed in adipocytes. Expressed in brown and white adipose tissue but not in liver. Protein levels in brown and white adipose tissues decrease following fasting (at protein level). Expressed in white and brown adipose tissues. Expressed in adipocytes. Not expressed in liver, skeletal muscle and brain.

The protein resides in the cytoplasm. Its subcellular location is the cytosol. It is found in the nucleus. In terms of biological role, regulator of adipocytes that acts by repressing FOXO1 transcriptional activity. Acts by promoting acetylation of FOXO1, both by preventing the interaction between FOXO1 and SIRT1 deacetylase, and by mediating acetyltransferase activity in vitro. Regulates insulin sensitivity and energy metabolism. This Mus musculus (Mouse) protein is Foxo1-corepressor (Fcor).